Reading from the N-terminus, the 481-residue chain is Glutamate--tRNA ligase (481 aa).

A 'HIGH' region motif is present at residues 9 to 19 (PSPTGNLHIGT). Zn(2+) contacts are provided by Cys98, Cys100, His125, and Asp127. Positions 248–252 (KLSKR) match the 'KMSKS' region motif. Lys251 contacts ATP.

It belongs to the class-I aminoacyl-tRNA synthetase family. Glutamate--tRNA ligase type 1 subfamily. As to quaternary structure, monomer. Zn(2+) is required as a cofactor.

It is found in the cytoplasm. It carries out the reaction tRNA(Glu) + L-glutamate + ATP = L-glutamyl-tRNA(Glu) + AMP + diphosphate. Its function is as follows. Catalyzes the attachment of glutamate to tRNA(Glu) in a two-step reaction: glutamate is first activated by ATP to form Glu-AMP and then transferred to the acceptor end of tRNA(Glu). In Synechococcus elongatus (strain ATCC 33912 / PCC 7942 / FACHB-805) (Anacystis nidulans R2), this protein is Glutamate--tRNA ligase.